The following is an 84-amino-acid chain: Large ribosomal subunit protein bL31B (84 aa).

Belongs to the bacterial ribosomal protein bL31 family. Type B subfamily. Part of the 50S ribosomal subunit.

The polypeptide is Large ribosomal subunit protein bL31B (Staphylococcus aureus (strain Mu3 / ATCC 700698)).